The chain runs to 906 residues: Protein translocase subunit SecA (906 aa).

ATP contacts are provided by residues Q86, 104 to 108, and D499; that span reads GEGKT. 4 residues coordinate Zn(2+): C890, C892, C901, and H902.

Belongs to the SecA family. Monomer and homodimer. Part of the essential Sec protein translocation apparatus which comprises SecA, SecYEG and auxiliary proteins SecDF-YajC and YidC. Zn(2+) serves as cofactor.

The protein resides in the cell inner membrane. Its subcellular location is the cytoplasm. It carries out the reaction ATP + H2O + cellular proteinSide 1 = ADP + phosphate + cellular proteinSide 2.. In terms of biological role, part of the Sec protein translocase complex. Interacts with the SecYEG preprotein conducting channel. Has a central role in coupling the hydrolysis of ATP to the transfer of proteins into and across the cell membrane, serving both as a receptor for the preprotein-SecB complex and as an ATP-driven molecular motor driving the stepwise translocation of polypeptide chains across the membrane. The chain is Protein translocase subunit SecA from Rickettsia prowazekii (strain Madrid E).